A 445-amino-acid polypeptide reads, in one-letter code: Elongation factor 1-alpha (445 aa).

Positions Lys-5–Ser-230 constitute a tr-type G domain. The G1 stretch occupies residues Gly-14–Ser-21. Gly-14 to Ser-21 serves as a coordination point for GTP. Residue Lys-55 is modified to N6,N6-dimethyllysine. Positions Cys-70–Asp-74 are G2. Lys-79 carries the N6,N6,N6-trimethyllysine modification. Residues Asp-91–Gly-94 are G3. GTP contacts are provided by residues Asp-91–His-95 and Asn-153–Asp-156. The interval Asn-153–Asp-156 is G4. An N6,N6,N6-trimethyllysine modification is found at Lys-187. Residues Ser-194–Trp-196 are G5. Residue Lys-261 is modified to N6-methyllysine. Residues Lys-306 and Lys-396 each carry the N6,N6,N6-trimethyllysine modification.

This sequence belongs to the TRAFAC class translation factor GTPase superfamily. Classic translation factor GTPase family. EF-Tu/EF-1A subfamily.

Its subcellular location is the cytoplasm. In terms of biological role, this protein promotes the GTP-dependent binding of aminoacyl-tRNA to the A-site of ribosomes during protein biosynthesis. This Euglena gracilis protein is Elongation factor 1-alpha (TEF).